The following is a 641-amino-acid chain: Peroxisomal targeting signal 1 receptor (641 aa).

Residue Cys-12 forms a Glycyl cysteine thioester (Cys-Gly) (interchain with G-Cter in ubiquitin) linkage. Residues 12 to 34 (CSEPNALGNFVQHFTNERSYHDK) are amphipathic helix 1 (AH1). The interval 74-92 (HLMMDRHLNLRDGPREHKE) is amphipathic helix 2 (AH2). The interval 261-288 (VEAAWDETARRTISDITRPITQINDPKL) is amphipathic helix 4 (AH4). Positions 331-335 (WTEDY) match the WxxxF/Y motif motif. TPR repeat units follow at residues 359 to 392 (DSDT…NPEN), 393 to 426 (AMAW…DPTN), 427 to 460 (SKAR…TPEY), 503 to 536 (PEVQ…SPTD), 538 to 570 (QLWN…KPSY), and 571 to 604 (VRAR…HPAP).

The protein belongs to the peroxisomal targeting signal receptor family. In terms of assembly, interacts (via WxxxF/Y and LVxEF motifs) with PEX14; promoting translocation through the PEX13-PEX14 docking complex. Interacts with PEX7, promoting peroxisomal import of proteins containing a C-terminal PTS2-type peroxisomal targeting signal. In terms of processing, monoubiquitinated at Cys-12 by PEX2 during PEX5 passage through the retrotranslocation channel. Cys-12 monoubiquitination acts as a recognition signal for the PEX1-PEX6 complex and is required for PEX5 extraction and export from peroxisomes. When PEX5 recycling is compromised, polyubiquitinated by PEX10 during its passage through the retrotranslocation channel, leading to its degradation.

The protein resides in the cytoplasm. Its subcellular location is the cytosol. The protein localises to the peroxisome matrix. Its function is as follows. Receptor that mediates peroxisomal import of proteins containing a C-terminal PTS1-type tripeptide peroxisomal targeting signal (SKL-type). Binds to cargo proteins containing a PTS1 peroxisomal targeting signal in the cytosol, and translocates them into the peroxisome matrix by passing through the PEX13-PEX14 docking complex along with cargo proteins. PEX5 receptor is then retrotranslocated into the cytosol, leading to release of bound cargo in the peroxisome matrix, and reset for a subsequent peroxisome import cycle. In addition to promoting peroxisomal translocation of proteins containing a PTS1 peroxisomal targeting signal, mediates peroxisomal import of proteins containing a C-terminal PTS2-type peroxisomal targeting signal via its interaction with PEX7. Interaction with PEX7 only takes place when PEX7 is associated with cargo proteins containing a PTS2 peroxisomal targeting signal. PEX7 along with PTS2-containing cargo proteins are then translocated through the PEX13-PEX14 docking complex together with PEX5. The polypeptide is Peroxisomal targeting signal 1 receptor (pex5) (Dictyostelium discoideum (Social amoeba)).